The following is a 391-amino-acid chain: 1-deoxy-D-xylulose 5-phosphate reductoisomerase (391 aa).

The NADPH site is built by threonine 17, glycine 18, serine 19, isoleucine 20, asparagine 47, and asparagine 130. Residue lysine 131 coordinates 1-deoxy-D-xylulose 5-phosphate. Glutamate 132 is a binding site for NADPH. Position 156 (aspartate 156) interacts with Mn(2+). Residues serine 157, glutamate 158, serine 182, and histidine 205 each coordinate 1-deoxy-D-xylulose 5-phosphate. Glutamate 158 is a Mn(2+) binding site. Residue glycine 211 coordinates NADPH. Positions 218, 223, 224, and 227 each coordinate 1-deoxy-D-xylulose 5-phosphate. Glutamate 227 is a binding site for Mn(2+).

This sequence belongs to the DXR family. Mg(2+) is required as a cofactor. Mn(2+) serves as cofactor.

It catalyses the reaction 2-C-methyl-D-erythritol 4-phosphate + NADP(+) = 1-deoxy-D-xylulose 5-phosphate + NADPH + H(+). It participates in isoprenoid biosynthesis; isopentenyl diphosphate biosynthesis via DXP pathway; isopentenyl diphosphate from 1-deoxy-D-xylulose 5-phosphate: step 1/6. In terms of biological role, catalyzes the NADPH-dependent rearrangement and reduction of 1-deoxy-D-xylulose-5-phosphate (DXP) to 2-C-methyl-D-erythritol 4-phosphate (MEP). This chain is 1-deoxy-D-xylulose 5-phosphate reductoisomerase, found in Rhizobium meliloti (strain 1021) (Ensifer meliloti).